The chain runs to 204 residues: MTFKGFSKKDFQTMQIPGLEARMAGIQNDIQPKFKAVGEELTTYLSAKLGDEMFLHIARHQRRSVNPPESTWLAICHDKRGYKKHPHFQVGLFDNYLFIWLAFIYENEESAKIANRFLKEKKLLAELPDTFAISPDHTEEKTFPVHDGHLETTLERFRDVKKGEFLVGKIYLPDDSHLSPGKDFIKEAEMVLDKLIPLYKAALQ.

It belongs to the UPF0637 family.

This Listeria welshimeri serovar 6b (strain ATCC 35897 / DSM 20650 / CCUG 15529 / CIP 8149 / NCTC 11857 / SLCC 5334 / V8) protein is UPF0637 protein lwe1043.